Consider the following 553-residue polypeptide: Zinc finger protein Elbow (553 aa).

Disordered regions lie at residues 59–243 (STKQ…MHSP) and 388–407 (GGGG…SGGS). Composition is skewed to low complexity over residues 96-110 (SPVS…TGSV) and 121-134 (SSSS…TFKP). 3 stretches are compositionally biased toward polar residues: residues 137-146 (PNNNISNITT), 153-173 (TNLS…KSMT), and 224-236 (TAST…NSKE). The interval 287-480 (SASAAAAAAS…PDAVLSAAAA (194 aa)) is self-association. Positions 287–553 (SASAAAAAAS…YGPRMGSSHP (267 aa)) are interaction with noc. The span at 388-406 (GGGGGGSSKSSGSQGGSGG) shows a compositional bias: gly residues. The C2H2-type zinc-finger motif lies at 437–466 (YVCSWIGSDAAYCGKRFGTSDDLFQHLRTH).

The protein belongs to the Elbow/Noc family. Self-associates. Interacts with gro and noc.

Its function is as follows. May negatively regulate Notch-induced cell proliferation in the eye-head primordium. May act in leg and wing primordia to negatively regulate body-wall specifying genes and thereby promote appendage formation. Required for tracheal development. This is Zinc finger protein Elbow (elB) from Drosophila melanogaster (Fruit fly).